We begin with the raw amino-acid sequence, 375 residues long: Acetylornithine aminotransferase (375 aa).

Residues 102-103 and Phe-129 each bind pyridoxal 5'-phosphate; that span reads GA. Arg-132 serves as a coordination point for N(2)-acetyl-L-ornithine. 214-217 is a binding site for pyridoxal 5'-phosphate; the sequence is DEVQ. Lys-243 carries the post-translational modification N6-(pyridoxal phosphate)lysine. N(2)-acetyl-L-ornithine is bound at residue Ser-271. Residue Thr-272 participates in pyridoxal 5'-phosphate binding.

It belongs to the class-III pyridoxal-phosphate-dependent aminotransferase family. ArgD subfamily. In terms of assembly, homodimer. Pyridoxal 5'-phosphate serves as cofactor.

The protein localises to the cytoplasm. It catalyses the reaction N(2)-acetyl-L-ornithine + 2-oxoglutarate = N-acetyl-L-glutamate 5-semialdehyde + L-glutamate. It functions in the pathway amino-acid biosynthesis; L-arginine biosynthesis; N(2)-acetyl-L-ornithine from L-glutamate: step 4/4. In Archaeoglobus fulgidus (strain ATCC 49558 / DSM 4304 / JCM 9628 / NBRC 100126 / VC-16), this protein is Acetylornithine aminotransferase.